The sequence spans 576 residues: MVKASEKEHEKYKPKLFDLENVKKKNSSSRHFKRWNSDSALRIEDPDIDDGTVFKKTATSSIQPILPVLAMDEQPQPREATDEESQKDSGKREIISFLGYNEKFTRDQVILRFRGLQAKSCYFAYVTELEQMKDKFAKLLLGEDMSGGSKGVSSALALSNAITNLAASAFGEIRRLEAISEDKKERWRREIGWLLSVTDHIVEFSPTHQTNEDGSSMEVMTTKQRTDLVSNIPSLKKLDEMLLDCLDKFKDQDEFYYVTPGSPESENSNSTRNDDKWWLPIVKVPPKGLSETLKRFLLSQRECVCQVLNSAMAINSQVLTEMEIPESYIDSLPKKGRASLGDMIYRMITLEMFDAEQFLLEMDLSSEHKILDLKNKFEASVVIWQRKIVQIDNKSSSPWSTNLSMDKRQQLEERAATILQLIKQEFPGISQSTLDISKIQFNRDIGLAIVESYSRILESLAHTVMSRIEDVLEADQLTQNPELAMCKIHIVKETESPEKEEEPNFCLLEDRPKKQKPTISLSEVMQWNIETNEPRKEKSDKKLLTRVSSMIMSNNKKTTYLESLGTTRSPTAGRYS.

Positions 119-485 (KSCYFAYVTE…QLTQNPELAM (367 aa)) constitute a PRONE domain. Polar residues predominate over residues 557–570 (KTTYLESLGTTRSP). Positions 557 to 576 (KTTYLESLGTTRSPTAGRYS) are disordered.

Interacts with PRK6. As to expression, specifically expressed in mature flowers.

In terms of biological role, guanine-nucleotide exchange factor (GEF) that acts as an activator of Rop (Rho of plants) GTPases by promoting the exchange of GDP for GTP. This is Rop guanine nucleotide exchange factor 13 from Arabidopsis thaliana (Mouse-ear cress).